Reading from the N-terminus, the 261-residue chain is Phosphatidylglycerol--prolipoprotein diacylglyceryl transferase (261 aa).

4 helical membrane-spanning segments follow: residues 13–33, 50–70, 86–106, and 112–132; these read LQIRWYSLSYIFGMIFAYWYI, VISWWVISVILGGRIGYILFY, WNGGMSFHGALVGVMIGMYIF, and IDVLAAFDLGACAVPVGIFFG. An a 1,2-diacyl-sn-glycero-3-phospho-(1'-sn-glycerol)-binding site is contributed by R133. The next 3 membrane-spanning stretches (helical) occupy residues 169-189, 197-217, and 232-252; these read LYEAFGEGFLLFIITNSLFFF, GMLSSVFCIWYGVIRFFIEFV, and ITMGQLLSIFMIIMGFYFIKL.

It belongs to the Lgt family.

The protein resides in the cell inner membrane. It carries out the reaction L-cysteinyl-[prolipoprotein] + a 1,2-diacyl-sn-glycero-3-phospho-(1'-sn-glycerol) = an S-1,2-diacyl-sn-glyceryl-L-cysteinyl-[prolipoprotein] + sn-glycerol 1-phosphate + H(+). It functions in the pathway protein modification; lipoprotein biosynthesis (diacylglyceryl transfer). Catalyzes the transfer of the diacylglyceryl group from phosphatidylglycerol to the sulfhydryl group of the N-terminal cysteine of a prolipoprotein, the first step in the formation of mature lipoproteins. This Ehrlichia canis (strain Jake) protein is Phosphatidylglycerol--prolipoprotein diacylglyceryl transferase.